A 169-amino-acid chain; its full sequence is Ribosome maturation factor RimM (169 aa).

One can recognise a PRC barrel domain in the interval 94 to 168; that stretch reads EEGQYYYHQI…KVIVELLEGL (75 aa).

The protein belongs to the RimM family. As to quaternary structure, binds ribosomal protein uS19.

The protein localises to the cytoplasm. Its function is as follows. An accessory protein needed during the final step in the assembly of 30S ribosomal subunit, possibly for assembly of the head region. Essential for efficient processing of 16S rRNA. May be needed both before and after RbfA during the maturation of 16S rRNA. It has affinity for free ribosomal 30S subunits but not for 70S ribosomes. This is Ribosome maturation factor RimM from Limosilactobacillus fermentum (strain NBRC 3956 / LMG 18251) (Lactobacillus fermentum).